The primary structure comprises 493 residues: Amino acid permease 2 (493 aa).

At 1 to 49 the chain is on the cytoplasmic side; sequence MGETAAANNHRHHHHHGHQVFDVASHDFVPPQPAFKCFDDDGRLKRTGT. A run of 2 helical transmembrane segments spans residues 50–70 and 71–91; these read VWTASAHIITAVIGSGVLSLA and WAIAQLGWIAGPAVMLLFSLV. Topologically, residues 92-138 are cytoplasmic; that stretch reads TLYSSTLLSDCYRTGDAVSGKRNYTYMDAVRSILGGFKFKICGLIQY. Residues 139 to 159 form a helical membrane-spanning segment; sequence LNLFGIAIGYTIAASISMMAI. The Extracellular segment spans residues 160–175; that stretch reads KRSNCFHKSGGKDPCH. Residues 176–196 form a helical membrane-spanning segment; that stretch reads MSSNPYMIVFGVAEILLSQVP. At 197–200 the chain is on the cytoplasmic side; the sequence is DFDQ. The chain crosses the membrane as a helical span at residues 201 to 221; that stretch reads IWWISIVAAVMSFTYSAIGLA. Residues 222 to 253 are Extracellular-facing; the sequence is LGIVQVAANGVFKGSLTGISIGTVTQTQKIWR. Residues 254 to 274 traverse the membrane as a helical segment; that stretch reads TFQALGDIAFAYSYSVVLIEI. At 275–293 the chain is on the cytoplasmic side; it reads QDTVRSPPAESKTMKKATK. Residues 294–314 traverse the membrane as a helical segment; that stretch reads ISIAVTTIFYMLCGSMGYAAF. Topologically, residues 315-340 are extracellular; sequence GDAAPGNLLTGFGFYNPFWLLDIANA. A helical membrane pass occupies residues 341 to 361; the sequence is AIVVHLVGAYQVFAQPIFAFI. Over 362–396 the chain is Cytoplasmic; the sequence is EKSVAERYPDNDFLSKEFEIRIPGFKSPYKVNVFR. Residues 397 to 417 traverse the membrane as a helical segment; it reads MVYRSGFVVTTTVISMLMPFF. Over 418–419 the chain is Extracellular; the sequence is ND. Residues 420 to 440 traverse the membrane as a helical segment; it reads VVGILGALGFWPLTVYFPVEM. Residues 441–458 are Cytoplasmic-facing; the sequence is YIKQRKVEKWSTRWVCLQ. A helical membrane pass occupies residues 459–479; it reads MLSVACLVISVVAGVGSIAGV. At 480-493 the chain is on the extracellular side; the sequence is MLDLKVYKPFKSTY.

The protein belongs to the amino acid/polyamine transporter 2 family. Amino acid/auxin permease (AAAP) (TC 2.A.18.2) subfamily. As to expression, highly expressed in developing pods. Found in the vascular strands of siliques, cotyledons, leaves and roots, in the inner phloem of stems, and in the funiculi. Lower levels of expression in flowers. Not expressed in seeds.

It is found in the cell membrane. Its activity is regulated as follows. Inhibited by diethylpyrocarbonate (DEPC). Functionally, amino acid-proton symporter. Stereospecific transporter with a broad specificity for histidine, arginine, glutamate and neutral amino acids, favoring small amino acids such as alanine, asparagine and glutamine. Also accepts large aromatic residues such as phenlalanine or tyrosine. Has a much higher affinity for basic amino acids as compared with AAP1. May function in xylem-to-phloem transfer and in uptake of amino acids assimilated in the green silique tissue. The polypeptide is Amino acid permease 2 (AAP2) (Arabidopsis thaliana (Mouse-ear cress)).